The primary structure comprises 343 residues: Holliday junction branch migration complex subunit RuvB (343 aa).

The segment at 1–26 (MKEKILTFSSDPSSPVTRHETEEDTG) is disordered. The large ATPase domain (RuvB-L) stretch occupies residues 3 to 193 (EKILTFSSDP…FGIFRKFDFY (191 aa)). Positions 7-16 (TFSSDPSSPV) are enriched in polar residues. Residues Leu32, Arg33, Gly74, Lys77, Thr78, Thr79, 140 to 142 (EDF), Arg183, Tyr193, and Arg230 each bind ATP. Mg(2+) is bound at residue Thr78. The small ATPAse domain (RuvB-S) stretch occupies residues 194–264 (SRQDLARIVS…AIDDALALEG (71 aa)). The interval 267–343 (EKGLTGLDRS…YRHLGVQWRG (77 aa)) is head domain (RuvB-H). Arg322 and Arg327 together coordinate DNA.

This sequence belongs to the RuvB family. Homohexamer. Forms an RuvA(8)-RuvB(12)-Holliday junction (HJ) complex. HJ DNA is sandwiched between 2 RuvA tetramers; dsDNA enters through RuvA and exits via RuvB. An RuvB hexamer assembles on each DNA strand where it exits the tetramer. Each RuvB hexamer is contacted by two RuvA subunits (via domain III) on 2 adjacent RuvB subunits; this complex drives branch migration. In the full resolvosome a probable DNA-RuvA(4)-RuvB(12)-RuvC(2) complex forms which resolves the HJ.

The protein localises to the cytoplasm. It carries out the reaction ATP + H2O = ADP + phosphate + H(+). In terms of biological role, the RuvA-RuvB-RuvC complex processes Holliday junction (HJ) DNA during genetic recombination and DNA repair, while the RuvA-RuvB complex plays an important role in the rescue of blocked DNA replication forks via replication fork reversal (RFR). RuvA specifically binds to HJ cruciform DNA, conferring on it an open structure. The RuvB hexamer acts as an ATP-dependent pump, pulling dsDNA into and through the RuvAB complex. RuvB forms 2 homohexamers on either side of HJ DNA bound by 1 or 2 RuvA tetramers; 4 subunits per hexamer contact DNA at a time. Coordinated motions by a converter formed by DNA-disengaged RuvB subunits stimulates ATP hydrolysis and nucleotide exchange. Immobilization of the converter enables RuvB to convert the ATP-contained energy into a lever motion, pulling 2 nucleotides of DNA out of the RuvA tetramer per ATP hydrolyzed, thus driving DNA branch migration. The RuvB motors rotate together with the DNA substrate, which together with the progressing nucleotide cycle form the mechanistic basis for DNA recombination by continuous HJ branch migration. Branch migration allows RuvC to scan DNA until it finds its consensus sequence, where it cleaves and resolves cruciform DNA. This is Holliday junction branch migration complex subunit RuvB from Desulfosudis oleivorans (strain DSM 6200 / JCM 39069 / Hxd3) (Desulfococcus oleovorans).